The sequence spans 206 residues: 3-demethoxyubiquinol 3-hydroxylase (206 aa).

Positions 55, 85, 88, 137, 169, and 172 each coordinate Fe cation.

Belongs to the COQ7 family. Requires Fe cation as cofactor.

It is found in the cell membrane. It catalyses the reaction a 5-methoxy-2-methyl-3-(all-trans-polyprenyl)benzene-1,4-diol + AH2 + O2 = a 3-demethylubiquinol + A + H2O. Its pathway is cofactor biosynthesis; ubiquinone biosynthesis. Its function is as follows. Catalyzes the hydroxylation of 2-nonaprenyl-3-methyl-6-methoxy-1,4-benzoquinol during ubiquinone biosynthesis. The protein is 3-demethoxyubiquinol 3-hydroxylase of Azoarcus sp. (strain BH72).